A 437-amino-acid chain; its full sequence is Membrane protein NfeD1b (437 aa).

The next 5 membrane-spanning stretches (helical) occupy residues 2 to 22, 231 to 251, 253 to 273, 288 to 308, and 316 to 336; these read LQIK…LLGV, WLTN…GLTV, LFSP…LLFF, LLFI…GGII, and IIAS…SLLI.

Belongs to the NfeD family.

The protein resides in the cell membrane. In Bacillus subtilis (strain 168), this protein is Membrane protein NfeD1b.